Here is a 331-residue protein sequence, read N- to C-terminus: Anthranilate phosphoribosyltransferase (331 aa).

Residues Gly79, 82-83 (GD), Ser87, 89-92 (NIST), 107-115 (KHCNSSISG), and Ser119 each bind 5-phospho-alpha-D-ribose 1-diphosphate. Residue Gly79 coordinates anthranilate. Residue Ser91 participates in Mg(2+) binding. Anthranilate is bound at residue Asn110. Residue Arg165 coordinates anthranilate. The Mg(2+) site is built by Asp223 and Glu224.

This sequence belongs to the anthranilate phosphoribosyltransferase family. Homodimer. Mg(2+) is required as a cofactor.

The enzyme catalyses N-(5-phospho-beta-D-ribosyl)anthranilate + diphosphate = 5-phospho-alpha-D-ribose 1-diphosphate + anthranilate. It functions in the pathway amino-acid biosynthesis; L-tryptophan biosynthesis; L-tryptophan from chorismate: step 2/5. Functionally, catalyzes the transfer of the phosphoribosyl group of 5-phosphorylribose-1-pyrophosphate (PRPP) to anthranilate to yield N-(5'-phosphoribosyl)-anthranilate (PRA). The chain is Anthranilate phosphoribosyltransferase from Buchnera aphidicola subsp. Melaphis rhois.